We begin with the raw amino-acid sequence, 126 residues long: Fluoride-specific ion channel FluC (126 aa).

The next 2 helical transmembrane spans lie at 2-22 and 36-56; these read IKSLFAVIIGGSVGCTLRWLL and GTLVVNLLAGLIIGTALAYFL. Na(+)-binding residues include G75 and S78. The next 2 helical transmembrane spans lie at 80–100 and 105–125; these read FSTFSVEVFALLQAGNYIWAL and VHVIGSLIMTALGFFIITILF.

The protein belongs to the fluoride channel Fluc/FEX (TC 1.A.43) family. In terms of assembly, homodimer.

The protein localises to the cell inner membrane. It catalyses the reaction fluoride(in) = fluoride(out). With respect to regulation, na(+) is not transported, but it plays an essential structural role and its presence is essential for fluoride channel function. Its function is as follows. Fluoride-specific ion channel. Important for reducing fluoride concentration in the cell, thus reducing its toxicity. Is highly specific for fluoride ions and cannot transport chloride ions. This Escherichia coli O1:K1 / APEC protein is Fluoride-specific ion channel FluC.